The chain runs to 433 residues: Histidine--tRNA ligase (433 aa).

It belongs to the class-II aminoacyl-tRNA synthetase family. As to quaternary structure, homodimer.

The protein resides in the cytoplasm. It carries out the reaction tRNA(His) + L-histidine + ATP = L-histidyl-tRNA(His) + AMP + diphosphate + H(+). This is Histidine--tRNA ligase from Crocosphaera subtropica (strain ATCC 51142 / BH68) (Cyanothece sp. (strain ATCC 51142)).